A 288-amino-acid chain; its full sequence is Phosphatidate cytidylyltransferase (288 aa).

Transmembrane regions (helical) follow at residues 10-30, 52-72, 89-109, 118-138, 152-172, 192-212, and 223-243; these read IVLI…YFAL, PLIR…WLYT, LLLI…ISYP, NPLL…AGVL, GLFL…GAYF, WEGV…FIHF, and ITGF…GDLT.

The protein belongs to the CDS family.

The protein resides in the cell inner membrane. It carries out the reaction a 1,2-diacyl-sn-glycero-3-phosphate + CTP + H(+) = a CDP-1,2-diacyl-sn-glycerol + diphosphate. The protein operates within phospholipid metabolism; CDP-diacylglycerol biosynthesis; CDP-diacylglycerol from sn-glycerol 3-phosphate: step 3/3. The chain is Phosphatidate cytidylyltransferase (cdsA) from Haemophilus influenzae (strain ATCC 51907 / DSM 11121 / KW20 / Rd).